Consider the following 898-residue polypeptide: Putative disease resistance protein At1g63350 (898 aa).

The stretch at 24–88 (VSYTHNLEKN…IESRVNDLLN (65 aa)) forms a coiled coil. The NB-ARC domain occupies 137-440 (DQASTSEVEE…CEEIIDGSEG (304 aa)). Residue 179–186 (GMGGVGKT) coordinates ATP. 6 LRR repeats span residues 516–537 (VVRR…LDCM), 538–559 (ELTT…FFNS), 562–584 (KLAV…ISEL), 586–608 (SLQY…QELK), 609–631 (KLIH…SCLH), and 632–654 (NLKV…KELE).

This sequence belongs to the disease resistance NB-LRR family.

Its function is as follows. Potential disease resistance protein. The chain is Putative disease resistance protein At1g63350 from Arabidopsis thaliana (Mouse-ear cress).